Here is a 775-residue protein sequence, read N- to C-terminus: Isopimaradiene synthase (775 aa).

The N-terminal 36 residues, 1 to 36 (MFSSSLKLKTNPLMDNKIHRSSSDRDFRGSTISSVK), are a transit peptide targeting the chloroplast. The Mg(2+) site is built by Asp525, Asp529, Asn669, Gln672, and Glu677. The short motif at 525-529 (DDFFD) is the DDXXD motif element.

This sequence belongs to the terpene synthase family. Mg(2+) is required as a cofactor. Ubiquitous expression in roots, stems, leaves and flowers.

Its subcellular location is the plastid. It localises to the chloroplast. The enzyme catalyses (+)-copalyl diphosphate = isopimara-8(14),15-diene + diphosphate. It participates in secondary metabolite biosynthesis; terpenoid biosynthesis. Its function is as follows. Involved in the biosynthesis of ent-kaurene diterpenoids natural products such as oridonin, miltiradiene, eriocalyxin B and nezukol, known to exhibit antitumor, anti-inflammatory and antibacterial activities. Catalyzes the conversion of (+)-copalyl diphosphate ((+)-CPP) to isopimaradiene. The chain is Isopimaradiene synthase from Isodon rubescens (Rabdosia rubescens).